The sequence spans 493 residues: Cysteine--tRNA ligase (493 aa).

Cys-31 contacts Zn(2+). The short motif at 33–43 is the 'HIGH' region element; sequence PTVYGDAHLGH. 3 residues coordinate Zn(2+): Cys-226, His-251, and Glu-255. The 'KMSKS' region motif lies at 283–287; sequence KMGKS. Residue Lys-286 participates in ATP binding.

The protein belongs to the class-I aminoacyl-tRNA synthetase family. In terms of assembly, monomer. The cofactor is Zn(2+).

The protein localises to the cytoplasm. The catalysed reaction is tRNA(Cys) + L-cysteine + ATP = L-cysteinyl-tRNA(Cys) + AMP + diphosphate. The polypeptide is Cysteine--tRNA ligase (Phocaeicola vulgatus (strain ATCC 8482 / DSM 1447 / JCM 5826 / CCUG 4940 / NBRC 14291 / NCTC 11154) (Bacteroides vulgatus)).